Reading from the N-terminus, the 436-residue chain is Phosphomethylpyrimidine synthase (436 aa).

Substrate-binding positions include Asn-69, Met-98, Tyr-127, His-163, 185-187 (SRG), 226-229 (DACR), and Glu-265. Residue His-269 participates in Zn(2+) binding. Residue Tyr-292 coordinates substrate. His-333 provides a ligand contact to Zn(2+). [4Fe-4S] cluster contacts are provided by Cys-409, Cys-412, and Cys-416.

It belongs to the ThiC family. [4Fe-4S] cluster serves as cofactor.

It carries out the reaction 5-amino-1-(5-phospho-beta-D-ribosyl)imidazole + S-adenosyl-L-methionine = 4-amino-2-methyl-5-(phosphooxymethyl)pyrimidine + CO + 5'-deoxyadenosine + formate + L-methionine + 3 H(+). The protein operates within cofactor biosynthesis; thiamine diphosphate biosynthesis. Its function is as follows. Catalyzes the synthesis of the hydroxymethylpyrimidine phosphate (HMP-P) moiety of thiamine from aminoimidazole ribotide (AIR) in a radical S-adenosyl-L-methionine (SAM)-dependent reaction. The sequence is that of Phosphomethylpyrimidine synthase from Clostridium perfringens (strain ATCC 13124 / DSM 756 / JCM 1290 / NCIMB 6125 / NCTC 8237 / Type A).